The primary structure comprises 126 residues: Large ribosomal subunit protein bL20 (126 aa).

This sequence belongs to the bacterial ribosomal protein bL20 family.

Its function is as follows. Binds directly to 23S ribosomal RNA and is necessary for the in vitro assembly process of the 50S ribosomal subunit. It is not involved in the protein synthesizing functions of that subunit. The polypeptide is Large ribosomal subunit protein bL20 (Buchnera aphidicola subsp. Baizongia pistaciae (strain Bp)).